Consider the following 311-residue polypeptide: L-lactate dehydrogenase 2 (311 aa).

Positions 14, 35, and 40 each coordinate NAD(+). Substrate is bound by residues Arg-90 and 122–125 (NPCD). NAD(+) is bound by residues 120 to 122 (ATN) and Thr-145. 150–153 (DTTR) is a substrate binding site. Catalysis depends on His-177, which acts as the Proton acceptor. Substrate is bound at residue Thr-230.

This sequence belongs to the LDH/MDH superfamily. LDH family. Homotetramer.

It localises to the cytoplasm. It catalyses the reaction (S)-lactate + NAD(+) = pyruvate + NADH + H(+). Its pathway is fermentation; pyruvate fermentation to lactate; (S)-lactate from pyruvate: step 1/1. Catalyzes the conversion of lactate to pyruvate. In Listeria monocytogenes serovar 1/2a (strain ATCC BAA-679 / EGD-e), this protein is L-lactate dehydrogenase 2.